The primary structure comprises 261 residues: Cytochrome c oxidase subunit 3 (261 aa).

Over Met1–Pro15 the chain is Mitochondrial matrix. A helical transmembrane segment spans residues Trp16 to Trp34. The Mitochondrial intermembrane portion of the chain corresponds to Phe35–Val40. Residues Ala41 to Thr66 form a helical membrane-spanning segment. Residues Phe67–Thr72 lie on the Mitochondrial matrix side of the membrane. A helical transmembrane segment spans residues Pro73 to Ser105. Topologically, residues Leu106–Glu128 are mitochondrial intermembrane. A helical transmembrane segment spans residues Val129–Met152. The Mitochondrial matrix portion of the chain corresponds to Glu153–Asn155. A helical membrane pass occupies residues Arg156–Glu183. The Mitochondrial intermembrane segment spans residues Ala184–Asp190. The helical transmembrane segment at Gly191 to Leu223 threads the bilayer. At Lys224 to His232 the chain is on the mitochondrial matrix side. The helical transmembrane segment at Phe233–Ile256 threads the bilayer. The Mitochondrial intermembrane segment spans residues Tyr257–Ser261.

The protein belongs to the cytochrome c oxidase subunit 3 family. As to quaternary structure, component of the cytochrome c oxidase (complex IV, CIV), a multisubunit enzyme composed of 14 subunits. The complex is composed of a catalytic core of 3 subunits MT-CO1, MT-CO2 and MT-CO3, encoded in the mitochondrial DNA, and 11 supernumerary subunits COX4I, COX5A, COX5B, COX6A, COX6B, COX6C, COX7A, COX7B, COX7C, COX8 and NDUFA4, which are encoded in the nuclear genome. The complex exists as a monomer or a dimer and forms supercomplexes (SCs) in the inner mitochondrial membrane with NADH-ubiquinone oxidoreductase (complex I, CI) and ubiquinol-cytochrome c oxidoreductase (cytochrome b-c1 complex, complex III, CIII), resulting in different assemblies (supercomplex SCI(1)III(2)IV(1) and megacomplex MCI(2)III(2)IV(2)).

The protein localises to the mitochondrion inner membrane. The catalysed reaction is 4 Fe(II)-[cytochrome c] + O2 + 8 H(+)(in) = 4 Fe(III)-[cytochrome c] + 2 H2O + 4 H(+)(out). Its function is as follows. Component of the cytochrome c oxidase, the last enzyme in the mitochondrial electron transport chain which drives oxidative phosphorylation. The respiratory chain contains 3 multisubunit complexes succinate dehydrogenase (complex II, CII), ubiquinol-cytochrome c oxidoreductase (cytochrome b-c1 complex, complex III, CIII) and cytochrome c oxidase (complex IV, CIV), that cooperate to transfer electrons derived from NADH and succinate to molecular oxygen, creating an electrochemical gradient over the inner membrane that drives transmembrane transport and the ATP synthase. Cytochrome c oxidase is the component of the respiratory chain that catalyzes the reduction of oxygen to water. Electrons originating from reduced cytochrome c in the intermembrane space (IMS) are transferred via the dinuclear copper A center (CU(A)) of subunit 2 and heme A of subunit 1 to the active site in subunit 1, a binuclear center (BNC) formed by heme A3 and copper B (CU(B)). The BNC reduces molecular oxygen to 2 water molecules using 4 electrons from cytochrome c in the IMS and 4 protons from the mitochondrial matrix. This Nanger dama (Dama gazelle) protein is Cytochrome c oxidase subunit 3 (MT-CO3).